The following is a 2845-amino-acid chain: Multiple epidermal growth factor-like domains protein 8 (2845 aa).

The first 27 residues, 1–27 (MALGKVLAMALVLALAVLGSLSPGARA), serve as a signal peptide directing secretion. Residues 28–2647 (GDCKGQRQVL…FFRQDQAHID (2620 aa)) are Extracellular-facing. 6 disulfide bridges follow: C30-C57, C142-C152, C146-C158, C174-C184, C178-C191, and C193-C202. The region spanning 30–140 (CKGQRQVLRE…LGFNASFRFS (111 aa)) is the CUB 1 domain. N-linked (GlcNAc...) asparagine glycosylation is present at N50. EGF-like domains follow at residues 138-168 (RFSL…GGPD) and 170-203 (GLQE…RACD). N217 carries N-linked (GlcNAc...) asparagine glycosylation. Kelch repeat units lie at residues 241-287 (LLAV…AVAW), 290-338 (SLVL…AGHA), 346-399 (WLYV…FHAP), 402-453 (ALLV…FHTA), 459-511 (YMVV…APPS), and 525-575 (VLLV…SRDP). PSI domains are found at residues 561 to 613 (YCSM…GDCQ), 847 to 899 (SCTS…TLCP), and 900 to 947 (LCEE…EECP). N1048 carries an N-linked (GlcNAc...) asparagine glycan. The region spanning 1074–1115 (DVDECRLGLARCHPRATCLNTPLSYECHCQRGYQGDGISHCN) is the EGF-like 3; calcium-binding domain. 16 disulfides stabilise this stretch: C1078-C1091, C1085-C1100, C1102-C1114, C1163-C1171, C1165-C1179, C1182-C1191, C1194-C1208, C1211-C1224, C1213-C1231, C1233-C1242, C1245-C1259, C1263-C1302, C1336-C1367, C1407-C1421, C1415-C1433, and C1435-C1444. Laminin EGF-like domains are found at residues 1163–1210 (CGCS…GCRP) and 1211–1261 (CQCN…SCFR). Residues 1263–1405 (CGGRALLTNV…WGFNASVGSA (143 aa)) form the CUB 2 domain. N1271 carries N-linked (GlcNAc...) asparagine glycosylation. T1353 carries the post-translational modification Phosphothreonine. The EGF-like 4 domain occupies 1403–1445 (GSARCGSGGPGSCPVPQECVPQDGAAGAGLCRCPQGWAGPHCR). Kelch repeat units follow at residues 1522 to 1570 (TLWM…SFHA), 1580 to 1626 (AMYL…HTLT), 1632 to 1679 (SLLL…SAVY), 1685 to 1735 (SLYV…VRGS), 1796 to 1843 (TMVV…ESVA), and 1852 to 1898 (RLYI…CHGA). The disordered stretch occupies residues 1726-1745 (RDRMRNVRGSSRGLGQVPGE). 4 PSI domains span residues 1876-1916 (PCRL…SPCS), 1924-1979 (ECRR…NDCR), 2060-2118 (PCHL…ESCS), and 2120-2177 (GCAQ…LSCP). N-linked (GlcNAc...) asparagine glycosylation is present at N2066. The EGF-like 5 domain occupies 2178–2216 (PEDECANGHHDCNETQNCHDQPHGYECSCKTGYTMDNMT). 2 disulfides stabilise this stretch: C2182–C2195 and C2189–C2204. N2229 is a glycosylation site (N-linked (GlcNAc...) asparagine). Cystine bridges form between C2253/C2261, C2255/C2270, C2273/C2282, C2285/C2299, C2380/C2389, C2382/C2397, C2399/C2424, and C2427/C2441. 2 consecutive Laminin EGF-like domains span residues 2253 to 2301 (CRCN…TCRP) and 2380 to 2443 (CQCN…QCYR). Residues 2523–2564 (TVHIQPPPAPPPPPPPADGGPRGAGDPGGAGASSGPGAPAEP) are disordered. The span at 2527–2540 (QPPPAPPPPPPPAD) shows a compositional bias: pro residues. Residues 2542–2556 (GPRGAGDPGGAGASS) show a composition bias toward gly residues. The chain crosses the membrane as a helical span at residues 2648 to 2668 (LFVFFSVFFSCFFLFLSLCVL). Residues 2669–2845 (LWKAKQALDQ…SQDNLTSMSL (177 aa)) are Cytoplasmic-facing. The segment covering 2817 to 2831 (GGGAGGSGHGTGAGR) has biased composition (gly residues). The interval 2817 to 2845 (GGGAGGSGHGTGAGRKGLLSQDNLTSMSL) is disordered. Residues 2836 to 2845 (SQDNLTSMSL) show a composition bias toward polar residues.

It is found in the membrane. In terms of biological role, acts as a negative regulator of hedgehog signaling. The chain is Multiple epidermal growth factor-like domains protein 8 (MEGF8) from Homo sapiens (Human).